The sequence spans 178 residues: Cytochrome b6-f complex iron-sulfur subunit (178 aa).

Residues 20–42 form a helical membrane-spanning segment; the sequence is LLTFGTATGVALGALYPVANYFM. In terms of domain architecture, Rieske spans 65–161; the sequence is KTGWLASHQA…VDVDDDAVLV (97 aa). [2Fe-2S] cluster contacts are provided by cysteine 107, histidine 109, cysteine 125, and histidine 128. A disulfide bridge links cysteine 112 with cysteine 127.

Belongs to the Rieske iron-sulfur protein family. The 4 large subunits of the cytochrome b6-f complex are cytochrome b6, subunit IV (17 kDa polypeptide, PetD), cytochrome f and the Rieske protein, while the 4 small subunits are PetG, PetL, PetM and PetN. The complex functions as a dimer. [2Fe-2S] cluster serves as cofactor.

It is found in the cellular thylakoid membrane. The enzyme catalyses 2 oxidized [plastocyanin] + a plastoquinol + 2 H(+)(in) = 2 reduced [plastocyanin] + a plastoquinone + 4 H(+)(out). Functionally, component of the cytochrome b6-f complex, which mediates electron transfer between photosystem II (PSII) and photosystem I (PSI), cyclic electron flow around PSI, and state transitions. The sequence is that of Cytochrome b6-f complex iron-sulfur subunit from Prochlorococcus marinus subsp. pastoris (strain CCMP1986 / NIES-2087 / MED4).